A 179-amino-acid polypeptide reads, in one-letter code: MASHIGKLPIAIPAGVEVKIEGQNFSAKGAKGSDSYVVPEGITAAVEGNEIVLTAADDLRPTRAKHGLARSIMAGMVKGVHDGYSKTLEIVGTGYRAVAKGQGIEFFLGYSHTITVNPPEGITLKVTDANHVVVEGTDKQVVGQVAANIRKLRAPEPYKGKGIKYSDERILRKAGKAGK.

It belongs to the universal ribosomal protein uL6 family. In terms of assembly, part of the 50S ribosomal subunit.

Functionally, this protein binds to the 23S rRNA, and is important in its secondary structure. It is located near the subunit interface in the base of the L7/L12 stalk, and near the tRNA binding site of the peptidyltransferase center. The sequence is that of Large ribosomal subunit protein uL6 from Bifidobacterium longum (strain DJO10A).